The chain runs to 301 residues: MSDAEEVVEEYEEEQEEEDWSEEEEDEQEEAVEEEEAGGAEPEPEGEAETEEANVEEVGPDEEAKDAEEGPVEDTKPKPSRLFMPNLVPPKIPDGERVDFDDIHRKRVEKDLNELQTLIEAHFENRKKEEEELISLKDRIEKRRAERAEQQRIRNEREKERQNRLAEERARREEEENRRKAEDEARKKKALSNMMHFGGYIQKQAQTERKSGKRQTEREKKKKILAERRKALAIDHLNEDQLREKAKELWQSIHNLEAEKFDLQEKFKQQKYEINVLRNRINDNQKVSKTRGKAKVTGRWK.

Over residues 1 to 72 (MSDAEEVVEE…EAKDAEEGPV (72 aa)) the composition is skewed to acidic residues. 2 disordered regions span residues 1–97 (MSDA…DGER) and 125–224 (NRKK…KKKI). Ser2 is subject to N-acetylserine. At Ser2 the chain carries Phosphoserine; by CK2. Composition is skewed to basic and acidic residues over residues 125–186 (NRKK…DEAR) and 206–224 (QTER…KKKI). Phosphothreonine; by PKC/PRKCA is present on Thr207. Residue Ser211 is modified to Phosphoserine; by PKC/PRKCA. Thr216 carries the post-translational modification Phosphothreonine; by PKC/PRKCA and RAF1. Position 297 is a phosphothreonine; by PKC/PRKCA (Thr297).

Belongs to the troponin T family. Post-translationally, phosphorylation at Thr-216 by PRKCA induces significant reduction in myofilament calcium sensitivity and actomyosin ATPase activity.

Troponin T is the tropomyosin-binding subunit of troponin, the thin filament regulatory complex which confers calcium-sensitivity to striated muscle actomyosin ATPase activity. The protein is Troponin T, cardiac muscle (Tnnt2) of Mus musculus (Mouse).